Consider the following 175-residue polypeptide: Alpha-crystallin B chain (175 aa).

An N-acetylmethionine modification is found at Met1. Ser19, Ser45, and Ser59 each carry phosphoserine. A sHSP domain is found at 56 to 164 (RAPSWIDTGL…PERTIPITRE (109 aa)). His83 contacts Zn(2+). An N6-acetyllysine modification is found at Lys92. 4 residues coordinate Zn(2+): His104, Glu106, His111, and His119. Residues 142–175 (VLTVNGPRKQASGPERTIPITREEKPAVTAAPKK) are disordered. Lys166 is modified (N6-acetyllysine). A glycan (O-linked (GlcNAc) threonine) is linked at Thr170.

It belongs to the small heat shock protein (HSP20) family. Heteromer composed of three CRYAA and one CRYAB subunits. Aggregates with homologous proteins, including the small heat shock protein HSPB1, to form large heteromeric complexes. Inter-subunit bridging via zinc ions enhances stability, which is crucial as there is no protein turn over in the lens. Interacts with HSPBAP1. Interacts with TTN/titin. Interacts with TMEM109; in the cellular response to DNA damage. Interacts with DES; binds rapidly during early stages of DES filament assembly and a reduced binding seen in the later stages. Interacts with TMED10; the interaction mediates the translocation from the cytoplasm into the ERGIC (endoplasmic reticulum-Golgi intermediate compartment) and thereby secretion. Interacts with ATP6V1A and with MTOR, forming a ternary complex. Lens as well as other tissues.

The protein resides in the cytoplasm. It localises to the nucleus. The protein localises to the secreted. It is found in the lysosome. Functionally, may contribute to the transparency and refractive index of the lens. Has chaperone-like activity, preventing aggregation of various proteins under a wide range of stress conditions. In lens epithelial cells, stabilizes the ATP6V1A protein, preventing its degradation by the proteasome. This chain is Alpha-crystallin B chain, found in Rattus norvegicus (Rat).